A 789-amino-acid chain; its full sequence is Leucine-rich repeat and fibronectin type-III domain-containing protein 2 (789 aa).

The first 20 residues, 1 to 20 (METLLGGLLAFGMAFAVVDA), serve as a signal peptide directing secretion. The region spanning 21–52 (CPKYCVCQNLSESLGTLCPSKGLLFVPPDIDR) is the LRRNT domain. The Extracellular segment spans residues 21–534 (CPKYCVCQNL…MHSQILGGTM (514 aa)). Residue N29 is glycosylated (N-linked (GlcNAc...) asparagine). LRR repeat units follow at residues 53–74 (RTVE…DFAN), 77–98 (GLVD…SFLD), 101–122 (SLRS…TLRG), 125–146 (NLQH…AFED), 150–171 (TLED…SVRR), 174–195 (NLHQ…TFAD), and 198–219 (KLAR…PIFA). The LRRCT domain maps to 242-288 (NPLHCNCELLWLRRLERDDDLETCGSPGGLKGRYFWHVREEEFVCEP). The 87-residue stretch at 289–375 (PLITQHTHKL…GEATAMVEVS (87 aa)) folds into the Ig-like domain. C310 and C359 are joined by a disulfide. N-linked (GlcNAc...) asparagine glycosylation is found at N332, N341, and N384. The interval 383 to 424 (SNSTSRTAPPKSRLSDITGSSKTSRGGGGSGGGEPPKSPPER) is disordered. Positions 407–416 (RGGGGSGGGE) are enriched in gly residues. Residues 421–518 (PPERAVLVSE…GCAQFFTKAD (98 aa)) form the Fibronectin type-III domain. Residues 535 to 555 (ILVIGGIIVATLLVFIVILMV) traverse the membrane as a helical segment. Residues 556–789 (RYKVCNHEAP…SSEWVMESTV (234 aa)) are Cytoplasmic-facing. 3 disordered regions span residues 577-602 (SQTN…PPKV), 619-654 (SDSS…PSLD), and 668-702 (QRKE…LGPP). The span at 583–599 (QPPPPSSAPAGAPPQGP) shows a compositional bias: pro residues. Positions 619–638 (SDSSSSSSLGSGEAAGLGRA) are enriched in low complexity. Pro residues predominate over residues 641–650 (RIPPSAPRPK). The short motif at 786–789 (ESTV) is the PDZ-binding element.

This sequence belongs to the LRFN family. In terms of assembly, forms heteromeric complexes with LRFN1, LRFN3, LRFN4 and LRFN5. Can form homomeric complexes, but not across cell junctions. Directly interacts with 2 NMDA receptor subunits GRIN1 and GRIN2A. Interacts with DLG1, DLG2, DLG3 and DLG4. In terms of processing, glycosylated.

The protein localises to the membrane. Its subcellular location is the synapse. It is found in the postsynaptic cell membrane. Its function is as follows. Promotes neurite outgrowth in hippocampal neurons. Enhances the cell surface expression of 2 NMDA receptor subunits GRIN1 and GRIN2A. May play a role in redistributing DLG4 to the cell periphery. This is Leucine-rich repeat and fibronectin type-III domain-containing protein 2 (LRFN2) from Homo sapiens (Human).